A 248-amino-acid polypeptide reads, in one-letter code: MWLGVITLFPEMFRAVTDFGVTGRAVKNGLLELHTWNPRDFTHDRHNTVDDRPYGGGPGMLMMVQPLRDAIHAAKAAAGEGAKVIYLSPQGRKLDQQGVTELAQSSRLILVCGRYEGIDERIIQTEVDEEWSIGDYVLSGGELPAMTLIDSVSRLVPGVLGKQASAEQDSFSDGLLDCPHYTRPESLDGVDVPAVLLSGNHEQIRLWRLQQSLGRTLLRRPELLQNLALTDEQTTLLAQFVEAMNKHA.

Residues G113 and 133–138 (IGDYVL) contribute to the S-adenosyl-L-methionine site.

Belongs to the RNA methyltransferase TrmD family. In terms of assembly, homodimer.

It localises to the cytoplasm. It catalyses the reaction guanosine(37) in tRNA + S-adenosyl-L-methionine = N(1)-methylguanosine(37) in tRNA + S-adenosyl-L-homocysteine + H(+). Specifically methylates guanosine-37 in various tRNAs. In Shewanella baltica (strain OS223), this protein is tRNA (guanine-N(1)-)-methyltransferase.